The chain runs to 360 residues: DNA replication and repair protein RecF (360 aa).

30–37 lines the ATP pocket; the sequence is GENGAGKT.

Belongs to the RecF family.

The protein localises to the cytoplasm. Its function is as follows. The RecF protein is involved in DNA metabolism; it is required for DNA replication and normal SOS inducibility. RecF binds preferentially to single-stranded, linear DNA. It also seems to bind ATP. The chain is DNA replication and repair protein RecF from Deinococcus deserti (strain DSM 17065 / CIP 109153 / LMG 22923 / VCD115).